The following is a 412-amino-acid chain: uncharacterized protein (412 aa).

[4Fe-4S] cluster contacts are provided by Cys-62, Cys-68, Cys-71, and Cys-143. S-adenosyl-L-methionine is bound by residues Gln-243, Phe-270, Glu-290, and Asp-338. The Nucleophile role is filled by Cys-364.

Belongs to the class I-like SAM-binding methyltransferase superfamily. RNA M5U methyltransferase family.

This is an uncharacterized protein from Mesorhizobium japonicum (strain LMG 29417 / CECT 9101 / MAFF 303099) (Mesorhizobium loti (strain MAFF 303099)).